The primary structure comprises 1097 residues: Kinesin-like protein KIF1C (1097 aa).

The Kinesin motor domain maps to 5 to 347 (SVKVAVRVRP…LRYADRTKQI (343 aa)). Position 96-103 (96-103 (GQTGAGKS)) interacts with ATP. Residue Ser-294 is modified to Phosphoserine. Positions 358 to 380 (NARLIRELQEEVARLRELLMAQG) form a coiled coil. Residues 397 to 434 (GGVLPAASSPPAPASPSSPPPHNGELEPSFSPSAEPQI) are disordered. Residues 404-418 (SSPPAPASPSSPPPH) show a composition bias toward pro residues. Residues 437–478 (EEAMERLQETEKIIAELNETWEEKLRKTEALRMEREALLAEM) adopt a coiled-coil conformation. Ser-491 is modified (phosphoserine). Residues 520 to 587 (TRVGQVDVDI…LKSGNRIVMG (68 aa)) form the FHA domain. The stretch at 630–671 (EQQGIDIKLEMEKRLQDLENQYRKEKEEADLLLEQQRLYADS) forms a coiled coil. 2 positions are modified to phosphoserine: Ser-671 and Ser-673. The stretch at 824-868 (AEVEDLRAHIDKLTGILQEVKLQNSSKDRELQALRDRMLRMERVI) forms a coiled coil. Disordered stretches follow at residues 897-921 (EAVS…ERVS) and 946-1097 (QGLQ…GAAV). Residue Ser-911 is modified to Phosphoserine. Positions 949 to 958 (QGSGGRGGGL) are enriched in gly residues. The span at 997 to 1015 (GPQPPEEVTAPPPPPNRRP) shows a compositional bias: pro residues. Over residues 1016 to 1026 (PSPRRPHRPRR) the composition is skewed to basic residues. Residue Ser-1028 is modified to Phosphoserine. Arg-1036 is subject to Omega-N-methylarginine. Over residues 1059–1077 (QPQPYPAQRPGPRYPPYTT) the composition is skewed to pro residues. Thr-1077 bears the Phosphothreonine mark. Ser-1086 bears the Phosphoserine mark. The segment covering 1086–1097 (SAPDLKESGAAV) has biased composition (basic and acidic residues).

Belongs to the TRAFAC class myosin-kinesin ATPase superfamily. Kinesin family. Unc-104 subfamily.

It localises to the cytoplasm. Its subcellular location is the cytoskeleton. Probable motor protein. The protein is Kinesin-like protein KIF1C (Kif1c) of Rattus norvegicus (Rat).